Here is a 275-residue protein sequence, read N- to C-terminus: Large ribosomal subunit protein uL2 (275 aa).

Positions Val-223 to Lys-275 are disordered. A compositionally biased stretch (basic and acidic residues) spans Asp-229–Glu-241.

The protein belongs to the universal ribosomal protein uL2 family. In terms of assembly, part of the 50S ribosomal subunit. Forms a bridge to the 30S subunit in the 70S ribosome.

One of the primary rRNA binding proteins. Required for association of the 30S and 50S subunits to form the 70S ribosome, for tRNA binding and peptide bond formation. It has been suggested to have peptidyltransferase activity; this is somewhat controversial. Makes several contacts with the 16S rRNA in the 70S ribosome. The chain is Large ribosomal subunit protein uL2 from Laribacter hongkongensis (strain HLHK9).